We begin with the raw amino-acid sequence, 285 residues long: Aquaporin-6 (285 aa).

A run of 3 helical transmembrane segments spans residues 36 to 56 (IFWK…VFSC), 76 to 96 (YCFK…ALLL), and 105 to 125 (ISLV…CYYG). Positions 86–88 (NPV) match the NPA 1 motif. Residue Asn-128 is glycosylated (N-linked (GlcNAc...) asparagine). Helical transmembrane passes span 143–163 (VSPA…ILTM) and 177–197 (GDSN…SGMA). An NPA 2 motif is present at residues 206–208 (NPM). A helical transmembrane segment spans residues 225–245 (YIYWIGPIFGCLLAVFTFDYT).

This sequence belongs to the MIP/aquaporin (TC 1.A.8) family.

The protein resides in the cell membrane. Probable water-specific aquaporin that may modulate the water content and osmolytes during anhydrobiosis. This chain is Aquaporin-6, found in Milnesium tardigradum (Water bear).